The sequence spans 218 residues: Ribose-5-phosphate isomerase A (218 aa).

Substrate contacts are provided by residues 28–31 (TGST), 81–84 (DGAD), and 94–97 (KGGG). The Proton acceptor role is filled by glutamate 103. Lysine 121 is a substrate binding site.

Belongs to the ribose 5-phosphate isomerase family. As to quaternary structure, homodimer.

It carries out the reaction aldehydo-D-ribose 5-phosphate = D-ribulose 5-phosphate. It participates in carbohydrate degradation; pentose phosphate pathway; D-ribose 5-phosphate from D-ribulose 5-phosphate (non-oxidative stage): step 1/1. In terms of biological role, catalyzes the reversible conversion of ribose-5-phosphate to ribulose 5-phosphate. This Methylococcus capsulatus (strain ATCC 33009 / NCIMB 11132 / Bath) protein is Ribose-5-phosphate isomerase A.